The primary structure comprises 69 residues: Purkinje cell protein 4-like protein 1 (69 aa).

A compositionally biased stretch (polar residues) spans 1-15 (MSELNTKTSPATNQA). Residues 1–47 (MSELNTKTSPATNQAPGPEEKGKAGSAKKTEDEEEEIDIDLTAPETE) are disordered. The residue at position 8 (Thr-8) is a Phosphothreonine. Basic and acidic residues predominate over residues 18–31 (PEEKGKAGSAKKTE). One can recognise an IQ domain in the interval 46-69 (TEKAALAIQGKFRRFQKRKKDPSS).

It belongs to the PCP4 family.

The polypeptide is Purkinje cell protein 4-like protein 1 (PCP4L1) (Bos taurus (Bovine)).